The following is a 330-amino-acid chain: uncharacterized protein (330 aa).

The next 10 helical transmembrane spans lie at 15–35 (LTLI…KGVL), 41–61 (FFVA…WAMG), 72–92 (GWGW…GFLA), 102–122 (LGSV…SWLF), 125–145 (VIGG…SLIG), 175–195 (LWML…PFVS), 201–221 (VVAT…IALV), 238–258 (LAYA…YLAS), 264–284 (SLSS…NLIL), and 286–306 (EQLS…IYLI). 2 consecutive EamA domains span residues 22 to 146 (FLWG…LIGL) and 182 to 308 (LSMA…LINQ).

The protein belongs to the EamA transporter family.

The protein localises to the cell membrane. This is an uncharacterized protein from Synechocystis sp. (strain ATCC 27184 / PCC 6803 / Kazusa).